The primary structure comprises 269 residues: MDPKVIIKNPTFDSSDNNPDLIKVKNVDFFYKGNKRALFNISMKIKEHTVTAFIGSSGSGKSTLLRLFNRMNDVEPKSIFKGEILINGKNIYSPETDIVKLRTDIGMVFQKPSPFPMSIYDNVAYGPRNQGVRDRKLVNSIVVENLKRAALWDEVKDNLRDSAFALSGGQQQRLCIARAIAMKPKILLMDEPTSALDPISTSKIEELITQLKKDFTIVLVTHHMQQAARVADYTAFFAKGKLIEYNKTKIIFSRPANKKTEDYITGRFE.

The 243-residue stretch at 22–264 folds into the ABC transporter domain; sequence IKVKNVDFFY…PANKKTEDYI (243 aa). Position 55–62 (55–62) interacts with ATP; that stretch reads GSSGSGKS.

Belongs to the ABC transporter superfamily. Phosphate importer (TC 3.A.1.7) family. As to quaternary structure, the complex is composed of two ATP-binding proteins (PstB), two transmembrane proteins (PstC and PstA) and a solute-binding protein (PstS).

It localises to the cell membrane. It catalyses the reaction phosphate(out) + ATP + H2O = ADP + 2 phosphate(in) + H(+). Its function is as follows. Part of the ABC transporter complex PstSACB involved in phosphate import. Responsible for energy coupling to the transport system. The polypeptide is Phosphate import ATP-binding protein PstB (Spiroplasma kunkelii).